Here is a 276-residue protein sequence, read N- to C-terminus: Proteasome subunit beta type-8 (276 aa).

Residues 1–72 (MALLEVCGAP…KNIRKEMVHG (72 aa)) constitute a propeptide, removed in mature form. Thr73 acts as the Nucleophile in catalysis.

It belongs to the peptidase T1B family. As to quaternary structure, the 26S proteasome consists of a 20S proteasome core and two 19S regulatory subunits. The 20S proteasome core is composed of 28 subunits that are arranged in four stacked rings, resulting in a barrel-shaped structure. The two end rings are each formed by seven alpha subunits, and the two central rings are each formed by seven beta subunits. The catalytic chamber with the active sites is on the inside of the barrel. Component of the immunoproteasome, where it displaces the equivalent housekeeping subunit PSMB5. Component of the spermatoproteasome, a form of the proteasome specifically found in testis. Directly interacts with POMP. Autocleaved. The resulting N-terminal Thr residue of the mature subunit is responsible for the nucleophile proteolytic activity.

It localises to the cytoplasm. Its subcellular location is the nucleus. The enzyme catalyses Cleavage of peptide bonds with very broad specificity.. Functionally, the proteasome is a multicatalytic proteinase complex which is characterized by its ability to cleave peptides with Arg, Phe, Tyr, Leu, and Glu adjacent to the leaving group at neutral or slightly basic pH. The proteasome has an ATP-dependent proteolytic activity. This subunit is involved in antigen processing to generate class I binding peptides. May participate in the generation of spliced peptides resulting from the ligation of two separate proteasomal cleavage products that are not contiguous in the parental protein. Required for adipocyte differentiation. The protein is Proteasome subunit beta type-8 (PSMB8) of Canis lupus familiaris (Dog).